A 636-amino-acid chain; its full sequence is Leucine-rich repeat and fibronectin type-III domain-containing protein 4 (636 aa).

Residues 1–16 (MAPPLLLLLLASGAAA) form the signal peptide. Residues 17 to 48 (CPLPCVCQNLSESLSTLCAHRGLLFVPPNVDR) form the LRRNT domain. Topologically, residues 17 to 518 (CPLPCVCQNL…LQAHVLGGTL (502 aa)) are extracellular. N-linked (GlcNAc...) asparagine glycosylation is found at N25 and N70. LRR repeat units follow at residues 49-70 (RTVELRLADNFIQALGPPDFRN), 73-94 (GLVDLTLSRNAITRIGARSFGD), 97-118 (SLRSLHLDGNRLVELGSSSLRG), 121-142 (NLQHLILSGNQLGRIAPGAFDD), 146-169 (SLEDLDVSYNNLRQVPWAGIGSMP), 170-191 (ALHTLNLDHNLIDALPPGVFAQ), and 194-215 (QLSRLDLTSNRLATLAPDPLFS). An LRRCT domain is found at 234 to 280 (NPLHCNCELLWLRRLARPDDLETCASPPTLAGRYFWAVPEGEFSCEP). The 87-residue stretch at 281 to 367 (PLIARHTQRL…GEATARVELR (87 aa)) folds into the Ig-like domain. C302 and C351 are joined by a disulfide. 4 N-linked (GlcNAc...) asparagine glycosylation sites follow: N324, N333, N376, and N440. A Fibronectin type-III domain is found at 405–502 (SEPAVQVTEV…GCAHFSTLPA (98 aa)). A helical membrane pass occupies residues 519 to 539 (TVAVGGVLVAALLVFTVALLV). Over 540 to 636 (RGRGAGNGRL…SAERLEESVV (97 aa)) the chain is Cytoplasmic. The tract at residues 556–585 (VQSQTNGGTSPMPKSHPPRSPPPRPQRSCS) is disordered. The span at 569 to 580 (KSHPPRSPPPRP) shows a compositional bias: pro residues. 2 positions are modified to phosphoserine: S585 and S627. The short motif at 633–636 (ESVV) is the PDZ-binding element.

It belongs to the LRFN family. In terms of assembly, can form heteromeric complexes with LRFN1, LRFN2, LRFN3 and LRFN5. Unable to form homophilic interactions across cell junctions. Interacts with DLG1, DLG2 and DLG3. Also interacts with DLG4. In terms of processing, glycosylated. As to expression, expressed in brain and testis. In the brain, weak, but broad expression in the cerebral cortex and diencephalic nuclei. Also detected in other parts of the central nervous system, including the olfactory bulb, pons, cerebellum, and medulla oblongata, as well as in the peripheral nervous system, such as the ganglia of cranial nerves and the dorsal root ganglion during gestation.

It localises to the membrane. Its function is as follows. Promotes neurite outgrowth in hippocampal neurons. May play a role in redistributing DLG4 to the cell periphery. This is Leucine-rich repeat and fibronectin type-III domain-containing protein 4 (Lrfn4) from Mus musculus (Mouse).